Reading from the N-terminus, the 33-residue chain is Brevinin-2HSb (33 aa).

Cys-27 and Cys-33 are oxidised to a cystine.

Expressed by the skin glands.

The protein localises to the secreted. In terms of biological role, has antibacterial activity against the Gram-positive bacterium S.aureus ATCC 25923 and the Gram-negative bacterium E.coli ATCC 25726. The polypeptide is Brevinin-2HSb (Odorrana hosii (Hose's rock frog)).